The primary structure comprises 100 residues: NADH-quinone oxidoreductase subunit K (100 aa).

Helical transmembrane passes span 3 to 23 (LNAY…GIFL), 29 to 49 (ISIM…FVAF), and 60 to 80 (IFTF…LAIL).

Belongs to the complex I subunit 4L family. In terms of assembly, NDH-1 is composed of 14 different subunits. Subunits NuoA, H, J, K, L, M, N constitute the membrane sector of the complex.

The protein localises to the cell inner membrane. The enzyme catalyses a quinone + NADH + 5 H(+)(in) = a quinol + NAD(+) + 4 H(+)(out). NDH-1 shuttles electrons from NADH, via FMN and iron-sulfur (Fe-S) centers, to quinones in the respiratory chain. The immediate electron acceptor for the enzyme in this species is believed to be ubiquinone. Couples the redox reaction to proton translocation (for every two electrons transferred, four hydrogen ions are translocated across the cytoplasmic membrane), and thus conserves the redox energy in a proton gradient. In Magnetococcus marinus (strain ATCC BAA-1437 / JCM 17883 / MC-1), this protein is NADH-quinone oxidoreductase subunit K.